The sequence spans 1043 residues: Unconventional myosin-Ia (1043 aa).

A Myosin motor domain is found at 8-694; it reads VGVEDLVLLE…TLFYLEEQRR (687 aa). Position 101-108 (101-108) interacts with ATP; it reads GESGSGKT. Positions 571–593 are actin-binding; the sequence is VAILMKNLYSKSPNYIRCIKPNE. IQ domains are found at residues 697–719, 720–742, and 743–772; these read LQQL…HYQL, MRKS…CYGK, and IKAS…SEAA. Residues 858–1042 enclose the TH1 domain; that stretch reads KASYPQSVPI…KGSHCLEVTV (185 aa).

This sequence belongs to the TRAFAC class myosin-kinesin ATPase superfamily. Myosin family. In terms of processing, phosphorylated by ALPK1.

In terms of biological role, involved in directing the movement of organelles along actin filaments. In Homo sapiens (Human), this protein is Unconventional myosin-Ia (MYO1A).